Consider the following 230-residue polypeptide: Uracil-DNA glycosylase (230 aa).

The active-site Proton acceptor is Asp-71.

It belongs to the uracil-DNA glycosylase (UDG) superfamily. UNG family.

The protein resides in the cytoplasm. The catalysed reaction is Hydrolyzes single-stranded DNA or mismatched double-stranded DNA and polynucleotides, releasing free uracil.. Excises uracil residues from the DNA which can arise as a result of misincorporation of dUMP residues by DNA polymerase or due to deamination of cytosine. This is Uracil-DNA glycosylase from Nocardioides sp. (strain ATCC BAA-499 / JS614).